A 371-amino-acid chain; its full sequence is UDP-N-acetylglucosamine--N-acetylmuramyl-(pentapeptide) pyrophosphoryl-undecaprenol N-acetylglucosamine transferase (371 aa).

Residues 15–17, Asn-126, Arg-172, Ser-199, Ile-256, 275–280, and Gln-301 each bind UDP-N-acetyl-alpha-D-glucosamine; these read TGG and ALTVSE.

The protein belongs to the glycosyltransferase 28 family. MurG subfamily.

It localises to the cell inner membrane. It catalyses the reaction di-trans,octa-cis-undecaprenyl diphospho-N-acetyl-alpha-D-muramoyl-L-alanyl-D-glutamyl-meso-2,6-diaminopimeloyl-D-alanyl-D-alanine + UDP-N-acetyl-alpha-D-glucosamine = di-trans,octa-cis-undecaprenyl diphospho-[N-acetyl-alpha-D-glucosaminyl-(1-&gt;4)]-N-acetyl-alpha-D-muramoyl-L-alanyl-D-glutamyl-meso-2,6-diaminopimeloyl-D-alanyl-D-alanine + UDP + H(+). It participates in cell wall biogenesis; peptidoglycan biosynthesis. Cell wall formation. Catalyzes the transfer of a GlcNAc subunit on undecaprenyl-pyrophosphoryl-MurNAc-pentapeptide (lipid intermediate I) to form undecaprenyl-pyrophosphoryl-MurNAc-(pentapeptide)GlcNAc (lipid intermediate II). The protein is UDP-N-acetylglucosamine--N-acetylmuramyl-(pentapeptide) pyrophosphoryl-undecaprenol N-acetylglucosamine transferase of Francisella philomiragia subsp. philomiragia (strain ATCC 25017 / CCUG 19701 / FSC 153 / O#319-036).